The primary structure comprises 129 residues: C-type natriuretic peptide 1 (129 aa).

A signal peptide spans 1 to 24; the sequence is MSYKRGTCLGFIMLLMVSHHHTKG. A propeptide spanning residues 25-107 is cleaved from the precursor; the sequence is KPLSSLQNLS…SRRYRQRNKK (83 aa). C113 and C129 are disulfide-bonded.

Belongs to the natriuretic peptide family.

It is found in the secreted. Functionally, hormone which plays a role in endochondral ossification through regulation of cartilaginous growth plate chondrocytes proliferation and differentiation. May also be vasoactive and natriuretic. May be important for freshwater adaptation. This Aquarana catesbeiana (American bullfrog) protein is C-type natriuretic peptide 1.